A 92-amino-acid chain; its full sequence is Small ribosomal subunit protein uS17 (92 aa).

This sequence belongs to the universal ribosomal protein uS17 family. In terms of assembly, part of the 30S ribosomal subunit.

Functionally, one of the primary rRNA binding proteins, it binds specifically to the 5'-end of 16S ribosomal RNA. The protein is Small ribosomal subunit protein uS17 of Cupriavidus necator (strain ATCC 17699 / DSM 428 / KCTC 22496 / NCIMB 10442 / H16 / Stanier 337) (Ralstonia eutropha).